The chain runs to 72 residues: NAD(P)H-quinone oxidoreductase subunit O (72 aa).

It belongs to the complex I NdhO subunit family. As to quaternary structure, NDH-1 can be composed of about 15 different subunits; different subcomplexes with different compositions have been identified which probably have different functions.

It is found in the cellular thylakoid membrane. The enzyme catalyses a plastoquinone + NADH + (n+1) H(+)(in) = a plastoquinol + NAD(+) + n H(+)(out). The catalysed reaction is a plastoquinone + NADPH + (n+1) H(+)(in) = a plastoquinol + NADP(+) + n H(+)(out). NDH-1 shuttles electrons from an unknown electron donor, via FMN and iron-sulfur (Fe-S) centers, to quinones in the respiratory and/or the photosynthetic chain. The immediate electron acceptor for the enzyme in this species is believed to be plastoquinone. Couples the redox reaction to proton translocation, and thus conserves the redox energy in a proton gradient. Cyanobacterial NDH-1 also plays a role in inorganic carbon-concentration. This chain is NAD(P)H-quinone oxidoreductase subunit O, found in Gloeothece citriformis (strain PCC 7424) (Cyanothece sp. (strain PCC 7424)).